The chain runs to 540 residues: Chaperonin GroEL 2 (540 aa).

Residues 29–32 (TLGP), 86–90 (DGTTT), Gly-413, 476–478 (NAA), and Asp-492 each bind ATP.

It belongs to the chaperonin (HSP60) family. In terms of assembly, forms a cylinder of 14 subunits composed of two heptameric rings stacked back-to-back. Interacts with the co-chaperonin GroES.

The protein localises to the cytoplasm. It catalyses the reaction ATP + H2O + a folded polypeptide = ADP + phosphate + an unfolded polypeptide.. Its function is as follows. Together with its co-chaperonin GroES, plays an essential role in assisting protein folding. The GroEL-GroES system forms a nano-cage that allows encapsulation of the non-native substrate proteins and provides a physical environment optimized to promote and accelerate protein folding. This is Chaperonin GroEL 2 from Streptomyces albus G.